A 70-amino-acid polypeptide reads, in one-letter code: ATP synthase subunit epsilon, mitochondrial (70 aa).

Belongs to the eukaryotic ATPase epsilon family. In terms of assembly, F-type ATPases have 2 components, CF(1) - the catalytic core - and CF(0) - the membrane proton channel. CF(1) has five subunits: alpha(3), beta(3), gamma(1), delta(1), epsilon(1). CF(0) has three main subunits: a, b and c.

The protein resides in the mitochondrion. It is found in the mitochondrion inner membrane. Its function is as follows. Mitochondrial membrane ATP synthase (F(1)F(0) ATP synthase or Complex V) produces ATP from ADP in the presence of a proton gradient across the membrane which is generated by electron transport complexes of the respiratory chain. F-type ATPases consist of two structural domains, F(1) - containing the extramembraneous catalytic core, and F(0) - containing the membrane proton channel, linked together by a central stalk and a peripheral stalk. During catalysis, ATP synthesis in the catalytic domain of F(1) is coupled via a rotary mechanism of the central stalk subunits to proton translocation. Part of the complex F(1) domain and of the central stalk which is part of the complex rotary element. Rotation of the central stalk against the surrounding alpha(3)beta(3) subunits leads to hydrolysis of ATP in three separate catalytic sites on the beta subunits. In Zea mays (Maize), this protein is ATP synthase subunit epsilon, mitochondrial.